Here is an 883-residue protein sequence, read N- to C-terminus: Phosphoenolpyruvate carboxylase (883 aa).

Active-site residues include H138 and K546.

Belongs to the PEPCase type 1 family. The cofactor is Mg(2+).

The enzyme catalyses oxaloacetate + phosphate = phosphoenolpyruvate + hydrogencarbonate. Its function is as follows. Forms oxaloacetate, a four-carbon dicarboxylic acid source for the tricarboxylic acid cycle. In Salmonella choleraesuis (strain SC-B67), this protein is Phosphoenolpyruvate carboxylase.